Reading from the N-terminus, the 544-residue chain is Chaperonin GroEL (544 aa).

Residues 30–33 (TLGP), Lys-51, 87–91 (DGTTT), Gly-415, and Asp-495 contribute to the ATP site.

This sequence belongs to the chaperonin (HSP60) family. As to quaternary structure, forms a cylinder of 14 subunits composed of two heptameric rings stacked back-to-back. Interacts with the co-chaperonin GroES.

Its subcellular location is the cytoplasm. It catalyses the reaction ATP + H2O + a folded polypeptide = ADP + phosphate + an unfolded polypeptide.. In terms of biological role, together with its co-chaperonin GroES, plays an essential role in assisting protein folding. The GroEL-GroES system forms a nano-cage that allows encapsulation of the non-native substrate proteins and provides a physical environment optimized to promote and accelerate protein folding. In Bartonella bacilliformis, this protein is Chaperonin GroEL.